A 285-amino-acid chain; its full sequence is 2,3,4,5-tetrahydropyridine-2,6-dicarboxylate N-succinyltransferase (285 aa).

Residues Arg-111 and Asp-148 each contribute to the substrate site.

This sequence belongs to the transferase hexapeptide repeat family. In terms of assembly, homotrimer.

The protein resides in the cytoplasm. The enzyme catalyses (S)-2,3,4,5-tetrahydrodipicolinate + succinyl-CoA + H2O = (S)-2-succinylamino-6-oxoheptanedioate + CoA. It functions in the pathway amino-acid biosynthesis; L-lysine biosynthesis via DAP pathway; LL-2,6-diaminopimelate from (S)-tetrahydrodipicolinate (succinylase route): step 1/3. This Rhizobium meliloti (strain 1021) (Ensifer meliloti) protein is 2,3,4,5-tetrahydropyridine-2,6-dicarboxylate N-succinyltransferase.